A 453-amino-acid chain; its full sequence is UDP-glycosyltransferase 76E9 (453 aa).

UDP-alpha-D-glucose-binding positions include Ser279, 337-339, 354-362, and 376-379; these read APQ, HCGWNSTLE, and TTDQ.

It belongs to the UDP-glycosyltransferase family.

The protein is UDP-glycosyltransferase 76E9 (UGT76E9) of Arabidopsis thaliana (Mouse-ear cress).